Reading from the N-terminus, the 248-residue chain is 1-(5-phosphoribosyl)-5-[(5-phosphoribosylamino)methylideneamino] imidazole-4-carboxamide isomerase (248 aa).

Aspartate 8 acts as the Proton acceptor in catalysis. Aspartate 129 serves as the catalytic Proton donor.

This sequence belongs to the HisA/HisF family.

Its subcellular location is the cytoplasm. It catalyses the reaction 1-(5-phospho-beta-D-ribosyl)-5-[(5-phospho-beta-D-ribosylamino)methylideneamino]imidazole-4-carboxamide = 5-[(5-phospho-1-deoxy-D-ribulos-1-ylimino)methylamino]-1-(5-phospho-beta-D-ribosyl)imidazole-4-carboxamide. It participates in amino-acid biosynthesis; L-histidine biosynthesis; L-histidine from 5-phospho-alpha-D-ribose 1-diphosphate: step 4/9. The polypeptide is 1-(5-phosphoribosyl)-5-[(5-phosphoribosylamino)methylideneamino] imidazole-4-carboxamide isomerase (Rhizobium leguminosarum bv. trifolii (strain WSM2304)).